Reading from the N-terminus, the 226-residue chain is Cytidylate kinase (226 aa).

10–18 is a binding site for ATP; it reads GPASSGKST.

Belongs to the cytidylate kinase family. Type 1 subfamily.

Its subcellular location is the cytoplasm. It carries out the reaction CMP + ATP = CDP + ADP. The catalysed reaction is dCMP + ATP = dCDP + ADP. This is Cytidylate kinase from Streptococcus equi subsp. equi (strain 4047).